The following is a 285-amino-acid chain: Vesicle-associated membrane protein 725 (285 aa).

Residues Met1–Leu261 lie on the Cytoplasmic side of the membrane. The Longin domain maps to Phe75 to Leu179. Positions Lys195–Glu255 constitute a v-SNARE coiled-coil homology domain. A helical; Anchor for type IV membrane protein transmembrane segment spans residues Ile262–Phe282. At Lys283 to Thr285 the chain is on the vesicular side.

It belongs to the synaptobrevin family. In terms of tissue distribution, expressed in flowers, leaves, stems and roots.

Its subcellular location is the cell membrane. It is found in the early endosome membrane. In terms of biological role, involved in the targeting and/or fusion of transport vesicles to their target membrane. The protein is Vesicle-associated membrane protein 725 of Arabidopsis thaliana (Mouse-ear cress).